Consider the following 41-residue polypeptide: Large ribosomal subunit protein bL36 (41 aa).

The protein belongs to the bacterial ribosomal protein bL36 family.

The polypeptide is Large ribosomal subunit protein bL36 (Gluconobacter oxydans (strain 621H) (Gluconobacter suboxydans)).